We begin with the raw amino-acid sequence, 116 residues long: Fluoride-specific ion channel FluC 1 (116 aa).

Transmembrane regions (helical) follow at residues 2 to 22, 33 to 53, 63 to 83, and 96 to 116; these read LVLV…RYGI, PLPI…GWIL, IFLG…INEL, and WEYF…GTLI. Residues G71 and T74 each coordinate Na(+).

It belongs to the fluoride channel Fluc/FEX (TC 1.A.43) family.

The protein resides in the cell membrane. It carries out the reaction fluoride(in) = fluoride(out). Na(+) is not transported, but it plays an essential structural role and its presence is essential for fluoride channel function. Functionally, fluoride-specific ion channel. Important for reducing fluoride concentration in the cell, thus reducing its toxicity. This is Fluoride-specific ion channel FluC 1 from Lactiplantibacillus plantarum (strain ATCC BAA-793 / NCIMB 8826 / WCFS1) (Lactobacillus plantarum).